The primary structure comprises 151 residues: Large ribosomal subunit protein bL9 (151 aa).

This sequence belongs to the bacterial ribosomal protein bL9 family.

In terms of biological role, binds to the 23S rRNA. The protein is Large ribosomal subunit protein bL9 of Mycobacteroides abscessus (strain ATCC 19977 / DSM 44196 / CCUG 20993 / CIP 104536 / JCM 13569 / NCTC 13031 / TMC 1543 / L948) (Mycobacterium abscessus).